The following is a 149-amino-acid chain: UPF0260 protein PA1299 (149 aa).

This sequence belongs to the UPF0260 family.

In Pseudomonas aeruginosa (strain ATCC 15692 / DSM 22644 / CIP 104116 / JCM 14847 / LMG 12228 / 1C / PRS 101 / PAO1), this protein is UPF0260 protein PA1299.